Consider the following 330-residue polypeptide: Malate dehydrogenase (330 aa).

NAD(+) is bound at residue 12-18; it reads GAAGQIG. Substrate contacts are provided by Arg93 and Arg99. NAD(+) is bound by residues Asn106, Gln113, and 130 to 132; that span reads VGN. Positions 132 and 166 each coordinate substrate. The Proton acceptor role is filled by His191.

The protein belongs to the LDH/MDH superfamily. MDH type 2 family.

The catalysed reaction is (S)-malate + NAD(+) = oxaloacetate + NADH + H(+). Its function is as follows. Catalyzes the reversible oxidation of malate to oxaloacetate. This chain is Malate dehydrogenase, found in Azoarcus sp. (strain BH72).